Here is a 62-residue protein sequence, read N- to C-terminus: Photosystem II reaction center protein Z (62 aa).

A run of 2 helical transmembrane segments spans residues 8-28 (TMFALIAISFLLIIGVPITFA) and 41-61 (FSGVSLWIVLVFAVGILNSFI).

This sequence belongs to the PsbZ family. As to quaternary structure, PSII is composed of 1 copy each of membrane proteins PsbA, PsbB, PsbC, PsbD, PsbE, PsbF, PsbH, PsbI, PsbJ, PsbK, PsbL, PsbM, PsbT, PsbY, PsbZ, Psb30/Ycf12, at least 3 peripheral proteins of the oxygen-evolving complex and a large number of cofactors. It forms dimeric complexes.

The protein localises to the plastid. It localises to the chloroplast thylakoid membrane. In terms of biological role, may control the interaction of photosystem II (PSII) cores with the light-harvesting antenna, regulates electron flow through the 2 photosystem reaction centers. PSII is a light-driven water plastoquinone oxidoreductase, using light energy to abstract electrons from H(2)O, generating a proton gradient subsequently used for ATP formation. The chain is Photosystem II reaction center protein Z from Welwitschia mirabilis (Tree tumbo).